The sequence spans 789 residues: Aconitate hydratase, mitochondrial (789 aa).

The transit peptide at 1-32 (MFCKISRAPARMGSRIFTQSTLRSFSCAPVAA) directs the protein to the mitochondrion. Substrate-binding positions include Q106 and 199 to 201 (DSH). 3 residues coordinate [4Fe-4S] cluster: C392, C455, and C458. Residues R481, R486, R613, and 676-677 (SR) each bind substrate.

This sequence belongs to the aconitase/IPM isomerase family. As to quaternary structure, monomer. Requires [4Fe-4S] cluster as cofactor.

Its subcellular location is the mitochondrion. It catalyses the reaction citrate = D-threo-isocitrate. It functions in the pathway carbohydrate metabolism; tricarboxylic acid cycle; isocitrate from oxaloacetate: step 2/2. Its function is as follows. Catalyzes the isomerization of citrate to isocitrate via cis-aconitate, a step in the citric acid cycle. The sequence is that of Aconitate hydratase, mitochondrial from Schizosaccharomyces pombe (strain 972 / ATCC 24843) (Fission yeast).